Here is a 614-residue protein sequence, read N- to C-terminus: Vitamin B12 transporter BtuB (614 aa).

Residues 1-20 form the signal peptide; that stretch reads MIKKASLLTACSVTAFSAWA. Residues 26-33 carry the TonB box motif; it reads DTLVVTAN. Positions 38–152 constitute a TBDR plug domain; that stretch reads PRSTVLAPTT…IGGVVNIITT (115 aa). Cyanocob(III)alamin contacts are provided by residues Leu-83, Ser-85, Asn-92, and 110–111; that span reads VS. Positions 155-614 constitute a TBDR beta-barrel domain; it reads HPGTEISAGW…EYTLSGSYTF (460 aa). Transmembrane regions (beta stranded) follow at residues 158–165, 169–178, and 184–195; these read TEISAGWG, YQNYDVSTQQ, and TRVTLLGDYAHT. Ca(2+)-binding residues include Asp-199, Gln-211, Asp-213, and Asp-215. The next 2 membrane-spanning stretches (beta stranded) occupy residues 217 to 227 and 232 to 248; these read FLSKTLYGALE and DVWS…NRTN. Ca(2+) is bound by residues Tyr-249 and Asp-250. Ala-251 lines the cyanocob(III)alamin pocket. Asp-261 serves as a coordination point for Ca(2+). A run of 14 beta stranded transmembrane segments spans residues 263-277, 279-296, 309-325, 328-337, 353-369, 371-381, 385-400, 403-417, 434-443, 449-458, 473-490, 494-509, 517-529, and 535-550; these read RKLY…LRYN, ELIK…KDYN, TLDE…NNII, HGNIGAGVDW, YDQR…QQVG, FTFEGAGRSDD, FGRH…WEFI, YRFI…KAPN, KSKQWEGAFE, VNWRISGYRN, YYNE…TANF, PLTH…ARNA, RRAK…QLDW, and DWGI…YDKD. Thr-309 is a cyanocob(III)alamin binding site. Arg-517 serves as a coordination point for cyanocob(III)alamin. A cyanocob(III)alamin-binding site is contributed by Tyr-551. The next 3 membrane-spanning stretches (beta stranded) occupy residues 558–572, 585–596, and 602–614; these read TVKM…LAVA, IANLFDKDYETV, and AGRE…SYTF. Positions 597–614 match the TonB C-terminal box motif; that stretch reads YGYQTAGREYTLSGSYTF.

It belongs to the TonB-dependent receptor family. BtuB (TC 1.B.14.3.1) subfamily.

It is found in the cell outer membrane. Its function is as follows. Involved in the active translocation of vitamin B12 (cyanocobalamin) across the outer membrane to the periplasmic space. It derives its energy for transport by interacting with the trans-periplasmic membrane protein TonB. The protein is Vitamin B12 transporter BtuB of Escherichia coli O6:K15:H31 (strain 536 / UPEC).